The chain runs to 187 residues: Ribosome maturation factor RimM (187 aa).

In terms of domain architecture, PRC barrel spans 94–168 (DDEFYHADLV…RVIVDMPDGL (75 aa)). Positions 167–187 (GLIGGDKPDTSDTAPLGQDFD) are disordered.

The protein belongs to the RimM family. Binds ribosomal protein uS19.

The protein localises to the cytoplasm. Its function is as follows. An accessory protein needed during the final step in the assembly of 30S ribosomal subunit, possibly for assembly of the head region. Essential for efficient processing of 16S rRNA. May be needed both before and after RbfA during the maturation of 16S rRNA. It has affinity for free ribosomal 30S subunits but not for 70S ribosomes. This chain is Ribosome maturation factor RimM, found in Jannaschia sp. (strain CCS1).